The sequence spans 193 residues: Biphenyl dioxygenase subunit beta (193 aa).

Belongs to the bacterial ring-hydroxylating dioxygenase beta subunit family. As to quaternary structure, heterohexamer consisting of 3 BphA1 subunits and 3 BphA2 subunits. A ferredoxin (BphA3) and a ferredoxin reductase (BphA4) must be present to obtain activity.

The catalysed reaction is biphenyl + NADH + O2 + H(+) = (2R,3S)-3-phenylcyclohexa-3,5-diene-1,2-diol + NAD(+). It functions in the pathway xenobiotic degradation; biphenyl degradation; 2-hydroxy-2,4-pentadienoate and benzoate from biphenyl: step 1/4. In terms of biological role, the beta subunit may be responsible for the substrate specificity of the enzyme. This Pseudomonas sp. (strain KKS102) protein is Biphenyl dioxygenase subunit beta (bphA2).